The sequence spans 820 residues: Phenylalanine--tRNA ligase beta subunit (820 aa).

Positions 42 to 154 (KGGLEGLVIG…AEAVPGTLAK (113 aa)) constitute a tRNA-binding domain. Residues 413–489 (PQDFMVELSY…RIYGYNNVEI (77 aa)) form the B5 domain. Mg(2+)-binding residues include D467, D473, E476, and D477. The region spanning 727–820 (SKFPAVKRDL…LEDKLNAKLR (94 aa)) is the FDX-ACB domain.

Belongs to the phenylalanyl-tRNA synthetase beta subunit family. Type 1 subfamily. In terms of assembly, tetramer of two alpha and two beta subunits. Mg(2+) serves as cofactor.

The protein resides in the cytoplasm. The catalysed reaction is tRNA(Phe) + L-phenylalanine + ATP = L-phenylalanyl-tRNA(Phe) + AMP + diphosphate + H(+). This is Phenylalanine--tRNA ligase beta subunit from Bacteroides thetaiotaomicron (strain ATCC 29148 / DSM 2079 / JCM 5827 / CCUG 10774 / NCTC 10582 / VPI-5482 / E50).